Reading from the N-terminus, the 303-residue chain is Recombination-associated protein RdgC (303 aa).

The protein belongs to the RdgC family.

It is found in the cytoplasm. The protein resides in the nucleoid. Functionally, may be involved in recombination. In Aeromonas hydrophila subsp. hydrophila (strain ATCC 7966 / DSM 30187 / BCRC 13018 / CCUG 14551 / JCM 1027 / KCTC 2358 / NCIMB 9240 / NCTC 8049), this protein is Recombination-associated protein RdgC.